The sequence spans 170 residues: Ribosome maturation factor RimP (170 aa).

It belongs to the RimP family.

It is found in the cytoplasm. Functionally, required for maturation of 30S ribosomal subunits. In Chlorobaculum parvum (strain DSM 263 / NCIMB 8327) (Chlorobium vibrioforme subsp. thiosulfatophilum), this protein is Ribosome maturation factor RimP.